We begin with the raw amino-acid sequence, 132 residues long: Fatty acid-binding protein 1 (132 aa).

Ala2 is subject to N-acetylalanine.

It belongs to the calycin superfamily. Fatty-acid binding protein (FABP) family.

The sequence is that of Fatty acid-binding protein 1 (FABP-1) from Fasciola gigantica (Giant liver fluke).